A 175-amino-acid chain; its full sequence is Peptide methionine sulfoxide reductase MsrA (175 aa).

Residue Cys10 is part of the active site.

Belongs to the MsrA Met sulfoxide reductase family.

It catalyses the reaction L-methionyl-[protein] + [thioredoxin]-disulfide + H2O = L-methionyl-(S)-S-oxide-[protein] + [thioredoxin]-dithiol. The enzyme catalyses [thioredoxin]-disulfide + L-methionine + H2O = L-methionine (S)-S-oxide + [thioredoxin]-dithiol. Its function is as follows. Has an important function as a repair enzyme for proteins that have been inactivated by oxidation. Catalyzes the reversible oxidation-reduction of methionine sulfoxide in proteins to methionine. In Clavibacter sepedonicus (Clavibacter michiganensis subsp. sepedonicus), this protein is Peptide methionine sulfoxide reductase MsrA.